The chain runs to 432 residues: MTNVVVVGSQWGDEGKGKIVDWLSERADIVVRFQGGHNAGHTLVIDGVSYKLSLLPSGVVRSGKLAVIGNGVVIDPHALIAEIDRLAAQGVTVTPQNLRIADNATLILSLHRELDGIREDAASNSGTKIGTTRRGIGPAYEDKVGRRAIRVMDLADLDTLPAKVDRLLTHHNALRRGLGEAEISHRAIMDELSSVAARVLPFMDTIWLLLDRERRKGARILFEGAQGTLLDIDHGTYPFVTSSNTVAGQAAAGSGMGPGSLGYILGITKAYTTRVGEGPFPTELDDEVGRFLGERGHEFGTVTGRKRRCGWFDAALVRQSVAANGITGIALTKLDVLDGLDELKICVGYTLDGQQIDHLPASQAQQALAKPVYITLEGWKESTVGARSWAELPAQAIKYVRQVEELIGAPVALLSTSPERDDTILVTDPFED.

Residues 12 to 18 (GDEGKGK) and 40 to 42 (GHT) each bind GTP. The Proton acceptor role is filled by Asp13. The Mg(2+) site is built by Asp13 and Gly40. IMP-binding positions include 13-16 (DEGK), 38-41 (NAGH), Thr132, Arg146, Gln226, Thr241, and Arg305. The Proton donor role is filled by His41. 301–307 (TVTGRKR) provides a ligand contact to substrate. Residues Arg307, 333-335 (KLD), and 415-417 (STS) each bind GTP.

The protein belongs to the adenylosuccinate synthetase family. As to quaternary structure, homodimer. Requires Mg(2+) as cofactor.

It is found in the cytoplasm. The catalysed reaction is IMP + L-aspartate + GTP = N(6)-(1,2-dicarboxyethyl)-AMP + GDP + phosphate + 2 H(+). It participates in purine metabolism; AMP biosynthesis via de novo pathway; AMP from IMP: step 1/2. Plays an important role in the de novo pathway of purine nucleotide biosynthesis. Catalyzes the first committed step in the biosynthesis of AMP from IMP. This Sinorhizobium medicae (strain WSM419) (Ensifer medicae) protein is Adenylosuccinate synthetase.